The chain runs to 234 residues: Large ribosomal subunit protein bL25 (234 aa).

The interval 1-24 (MATVMELKATARPKSGKGAARAER) is disordered.

It belongs to the bacterial ribosomal protein bL25 family. CTC subfamily. Part of the 50S ribosomal subunit; part of the 5S rRNA/L5/L18/L25 subcomplex. Contacts the 5S rRNA. Binds to the 5S rRNA independently of L5 and L18.

Its function is as follows. This is one of the proteins that binds to the 5S RNA in the ribosome where it forms part of the central protuberance. The chain is Large ribosomal subunit protein bL25 from Rhodopseudomonas palustris (strain BisB5).